The following is a 267-amino-acid chain: L-aspartate dehydrogenase 2 (267 aa).

Residues Ala123 and Asn189 each contribute to the NAD(+) site. Residue His219 is part of the active site.

Belongs to the L-aspartate dehydrogenase family.

The catalysed reaction is L-aspartate + NADP(+) + H2O = oxaloacetate + NH4(+) + NADPH + H(+). It carries out the reaction L-aspartate + NAD(+) + H2O = oxaloacetate + NH4(+) + NADH + H(+). The protein operates within cofactor biosynthesis; NAD(+) biosynthesis; iminoaspartate from L-aspartate (dehydrogenase route): step 1/1. In terms of biological role, specifically catalyzes the NAD or NADP-dependent dehydrogenation of L-aspartate to iminoaspartate. The polypeptide is L-aspartate dehydrogenase 2 (Bordetella pertussis (strain Tohama I / ATCC BAA-589 / NCTC 13251)).